A 181-amino-acid polypeptide reads, in one-letter code: Large ribosomal subunit protein uL6 (181 aa).

Belongs to the universal ribosomal protein uL6 family. As to quaternary structure, part of the 50S ribosomal subunit.

This protein binds to the 23S rRNA, and is important in its secondary structure. It is located near the subunit interface in the base of the L7/L12 stalk, and near the tRNA binding site of the peptidyltransferase center. The protein is Large ribosomal subunit protein uL6 of Flavobacterium psychrophilum (strain ATCC 49511 / DSM 21280 / CIP 103535 / JIP02/86).